The primary structure comprises 1076 residues: Bifunctional glutamine synthetase adenylyltransferase/adenylyl-removing enzyme (1076 aa).

Residues 1–521 (MESSIFKPSS…LHLDIYYRPM (521 aa)) form an adenylyl removase region. An adenylyl transferase region spans residues 524–1076 (VNAQMENDQI…LERNRRRAQR (553 aa)). Over residues 1042–1056 (TATASAATQQPQTAP) the composition is skewed to low complexity. The tract at residues 1042-1076 (TATASAATQQPQTAPRPRMHVIAPRLERNRRRAQR) is disordered.

It belongs to the GlnE family. It depends on Mg(2+) as a cofactor.

It catalyses the reaction [glutamine synthetase]-O(4)-(5'-adenylyl)-L-tyrosine + phosphate = [glutamine synthetase]-L-tyrosine + ADP. The enzyme catalyses [glutamine synthetase]-L-tyrosine + ATP = [glutamine synthetase]-O(4)-(5'-adenylyl)-L-tyrosine + diphosphate. Functionally, involved in the regulation of glutamine synthetase GlnA, a key enzyme in the process to assimilate ammonia. When cellular nitrogen levels are high, the C-terminal adenylyl transferase (AT) inactivates GlnA by covalent transfer of an adenylyl group from ATP to specific tyrosine residue of GlnA, thus reducing its activity. Conversely, when nitrogen levels are low, the N-terminal adenylyl removase (AR) activates GlnA by removing the adenylyl group by phosphorolysis, increasing its activity. The regulatory region of GlnE binds the signal transduction protein PII (GlnB) which indicates the nitrogen status of the cell. This is Bifunctional glutamine synthetase adenylyltransferase/adenylyl-removing enzyme from Bifidobacterium longum (strain DJO10A).